Reading from the N-terminus, the 443-residue chain is Nitrate/nitrite binding protein NrtA (443 aa).

Residues 1-25 (MSQFSRRKFLLTAGGTAAAALWLNA) form the signal peptide. Cysteine 26 is lipidated: N-palmitoyl cysteine. Cysteine 26 is lipidated: S-diacylglycerol cysteine. The segment covering 31–46 (SSTDTTGSTSTPAPSG) has biased composition (low complexity). Residues 31 to 52 (SSTDTTGSTSTPAPSGTSGGDA) are disordered. Tryptophan 96, glutamine 150, histidine 195, glycine 239, and lysine 268 together coordinate nitrate.

Belongs to the CmpA/NrtA family. In terms of assembly, the complex is composed of two ATP-binding proteins (NrtC and NrtD), two transmembrane proteins (NrtB) and a solute-binding protein (NrtA). NrtA can form homotrimers. The N-terminus is blocked.

The protein resides in the cell inner membrane. Part of the ABC transporter complex NrtABCD involved in nitrate uptake. The complex is probably also involved in nitrite transport. NrtA is the substrate-binding protein. Binds both nitrate and nitrite with high affinity. The protein is Nitrate/nitrite binding protein NrtA of Synechococcus elongatus (strain ATCC 33912 / PCC 7942 / FACHB-805) (Anacystis nidulans R2).